The sequence spans 131 residues: Ribonuclease P protein component (131 aa).

The protein belongs to the RnpA family. In terms of assembly, consists of a catalytic RNA component (M1 or rnpB) and a protein subunit.

It catalyses the reaction Endonucleolytic cleavage of RNA, removing 5'-extranucleotides from tRNA precursor.. In terms of biological role, RNaseP catalyzes the removal of the 5'-leader sequence from pre-tRNA to produce the mature 5'-terminus. It can also cleave other RNA substrates such as 4.5S RNA. The protein component plays an auxiliary but essential role in vivo by binding to the 5'-leader sequence and broadening the substrate specificity of the ribozyme. In Stutzerimonas stutzeri (strain A1501) (Pseudomonas stutzeri), this protein is Ribonuclease P protein component.